A 537-amino-acid chain; its full sequence is Putative cysteine ligase BshC (537 aa).

A coiled-coil region spans residues 422-450 (IEKVEGMIEQQRRLYQDLLDEVAGNQNNI).

This sequence belongs to the BshC family.

In terms of biological role, involved in bacillithiol (BSH) biosynthesis. May catalyze the last step of the pathway, the addition of cysteine to glucosamine malate (GlcN-Mal) to generate BSH. This chain is Putative cysteine ligase BshC, found in Staphylococcus aureus (strain MRSA252).